A 487-amino-acid chain; its full sequence is L-asparagine permease 2 (487 aa).

12 helical membrane passes run 26–46, 50–70, 98–118, 133–153, 163–183, 214–234, 256–276, 290–310, 341–361, 369–389, 414–434, and 440–460; these read QLQM…GAGG, SAGP…FLIL, VAFV…IVDT, PIPQ…MNLI, FWAS…GTVF, IVLV…VGIA, IACF…YTAY, IGID…ALSS, TGVP…GIIL, AFEI…ATIV, SPFS…LMYF, and PWMI…WYLV.

This sequence belongs to the amino acid-polyamine-organocation (APC) superfamily. Amino acid transporter (AAT) (TC 2.A.3.1) family.

It localises to the cell membrane. Functionally, dual function in both nitrogen assimilation and in protection against acid stress during infection. Involved in asparagine uptake. This is L-asparagine permease 2 (ansP2) from Mycobacterium bovis (strain ATCC BAA-935 / AF2122/97).